Reading from the N-terminus, the 1555-residue chain is Pre-mRNA cleavage complex 2 protein Pcf11 (1555 aa).

At serine 2 the chain carries N-acetylserine. Residues 14–142 (AREDACRDYQ…ALDVRVNSLD (129 aa)) enclose the CID domain. Serine 120 carries the phosphoserine; by WNK1 modification. A Phosphothreonine; by WNK1 modification is found at threonine 121. The tract at residues 167–186 (NKSPEEPSTPGTVVSSPSIS) is disordered. A phosphoserine mark is found at serine 169 and serine 182. Over residues 174-186 (STPGTVVSSPSIS) the composition is skewed to low complexity. Residues 202–239 (QLIRQQLLAKQKQLLELQQKKLELELEQAKAQLAVSLS) are a coiled coil. Residues 266–648 (VKAPHQVPVQ…QQQHRLSVDA (383 aa)) form a disordered region. A Glycyl lysine isopeptide (Lys-Gly) (interchain with G-Cter in SUMO2) cross-link involves residue lysine 291. Basic and acidic residues predominate over residues 307–317 (HGKDQSHRKEF). Positions 320–333 (NTLNQSDTKTSKTI) are enriched in polar residues. Lysine 328 participates in a covalent cross-link: Glycyl lysine isopeptide (Lys-Gly) (interchain with G-Cter in SUMO2). Composition is skewed to basic and acidic residues over residues 342 to 364 (KQEK…DSKS), 380 to 421 (HTKD…DVKE), and 427 to 442 (EKKD…EHRL). Lysine 456 participates in a covalent cross-link: Glycyl lysine isopeptide (Lys-Gly) (interchain with G-Cter in SUMO2). Threonine 459 is subject to Phosphothreonine. A compositionally biased stretch (basic residues) spans 475–486 (STRKRSRSRSPK). Serine 489, serine 494, serine 509, and serine 511 each carry phosphoserine. The segment covering 494–508 (SPKRRDRRSPKRRQR) has biased composition (basic residues). The segment covering 529 to 567 (SHMEEFTPPSREDRNAKRSTKQDIRDPRRMKKTEEERPQ) has biased composition (basic and acidic residues). The segment covering 568–578 (ETTNQHSTKSG) has biased composition (polar residues). Over residues 599–615 (SGWEENKSLQQVDEHSK) the composition is skewed to basic and acidic residues. Phosphoserine is present on serine 645. Lysine 654 participates in a covalent cross-link: Glycyl lysine isopeptide (Lys-Gly) (interchain with G-Cter in SUMO2). Position 705 is a phosphoserine (serine 705). Disordered stretches follow at residues 707–732 (FNDR…PASR) and 749–781 (RPLF…PRID). Residues 716 to 725 (PRYEDSDKPF) are compositionally biased toward basic and acidic residues. Lysine 723 participates in a covalent cross-link: Glycyl lysine isopeptide (Lys-Gly) (interchain with G-Cter in SUMO2). Residues serine 728 and serine 777 each carry the phosphoserine modification. Threonine 785 is subject to Phosphothreonine. Serine 794 bears the Phosphoserine mark. Residues arginine 805, arginine 820, and arginine 833 each carry the asymmetric dimethylarginine modification. Residue serine 851 is modified to Phosphoserine. Residues arginine 929, arginine 942, arginine 955, arginine 981, arginine 994, and arginine 1007 each carry the asymmetric dimethylarginine modification. A disordered region spans residues 1056–1081 (HGQPGPRFERTPGQPGPQRFDGPPGQ). Asymmetric dimethylarginine is present on residues arginine 1093 and arginine 1104. Disordered stretches follow at residues 1127 to 1147 (VSFN…NAPS) and 1159 to 1187 (FDSP…RASG). Serine 1161 bears the Phosphoserine mark. Low complexity predominate over residues 1162–1175 (PQGPNFNGPHGPGN). Lysine 1278 participates in a covalent cross-link: Glycyl lysine isopeptide (Lys-Gly) (interchain with G-Cter in SUMO2). Polar residues predominate over residues 1289-1298 (SATTQVSEVT). Residues 1289 to 1315 (SATTQVSEVTAQPPPEEEEDQNEDQDV) are disordered. Positions 1303 to 1315 (PEEEEDQNEDQDV) are enriched in acidic residues. Residues lysine 1419, lysine 1511, and lysine 1524 each participate in a glycyl lysine isopeptide (Lys-Gly) (interchain with G-Cter in SUMO2) cross-link. The interval 1516–1555 (EPCDSPKVKEERIDTPPACTEESIATPSEIKTENDTVESV) is disordered. The segment covering 1519–1529 (DSPKVKEERID) has biased composition (basic and acidic residues). Threonine 1530 bears the Phosphothreonine mark. Lysine 1546 is covalently cross-linked (Glycyl lysine isopeptide (Lys-Gly) (interchain with G-Cter in SUMO2)).

As to quaternary structure, associates with the phosphorylated CTD domain of POLR2A /RNA polymerase II. Phosphorylation at Ser-120 and/or Thr-121 by WNK1 weakens its association with POLR2A/RNA polymerase II, promoting transcript release from the chromatin template and mRNA export to the cytoplasm.

The protein localises to the nucleus. In terms of biological role, component of pre-mRNA cleavage complex II, which promotes transcription termination by RNA polymerase II. The chain is Pre-mRNA cleavage complex 2 protein Pcf11 from Homo sapiens (Human).